The primary structure comprises 658 residues: Probable replication factor A 73 kDa subunit (658 aa).

Disordered stretches follow at residues 134–155 and 169–222; these read PEVK…RPNI and SEFQ…TERG. Residues 236–326 constitute a DNA-binding region (OB); sequence FRIHGMVSRK…TLRNDSVVEA (91 aa). A C4-type zinc finger spans residues 518–539; sequence CASEGCQKKVIESDGEYRCEKC.

This sequence belongs to the replication factor A protein 1 family. Component of the heterotrimeric canonical replication protein A complex (RPA).

It localises to the nucleus. Functionally, as part of the heterotrimeric replication protein A complex (RPA/RP-A), binds and stabilizes single-stranded DNA intermediates, that form during DNA replication or upon DNA stress. It prevents their reannealing and in parallel, recruits and activates different proteins and complexes involved in DNA metabolism. Thereby, it plays an essential role both in DNA replication and the cellular response to DNA damage. The sequence is that of Probable replication factor A 73 kDa subunit from Caenorhabditis briggsae.